The sequence spans 81 residues: MNPIICAASVIGAGLAIGLGAIGPGIGQGTASGKAIEGLARQPEAEGKIRGTLLLSLAFMEALTIYGLVVALAIIFANPFV.

The next 2 membrane-spanning stretches (helical) occupy residues proline 3 to glycine 23 and leucine 57 to alanine 77.

This sequence belongs to the ATPase C chain family. In terms of assembly, F-type ATPases have 2 components, F(1) - the catalytic core - and F(0) - the membrane proton channel. F(1) has five subunits: alpha(3), beta(3), gamma(1), delta(1), epsilon(1). F(0) has four main subunits: a(1), b(1), b'(1) and c(10-14). The alpha and beta chains form an alternating ring which encloses part of the gamma chain. F(1) is attached to F(0) by a central stalk formed by the gamma and epsilon chains, while a peripheral stalk is formed by the delta, b and b' chains.

The protein resides in the plastid. Its subcellular location is the chloroplast thylakoid membrane. Functionally, f(1)F(0) ATP synthase produces ATP from ADP in the presence of a proton or sodium gradient. F-type ATPases consist of two structural domains, F(1) containing the extramembraneous catalytic core and F(0) containing the membrane proton channel, linked together by a central stalk and a peripheral stalk. During catalysis, ATP synthesis in the catalytic domain of F(1) is coupled via a rotary mechanism of the central stalk subunits to proton translocation. Key component of the F(0) channel; it plays a direct role in translocation across the membrane. A homomeric c-ring of between 10-14 subunits forms the central stalk rotor element with the F(1) delta and epsilon subunits. In Euglena gracilis, this protein is ATP synthase subunit c, chloroplastic.